We begin with the raw amino-acid sequence, 20 residues long: Agglutinin beta-1 chain (20 aa).

Positions 1–11 are enriched in polar residues; the sequence is NEQSGKSQTVI. The disordered stretch occupies residues 1 to 20; it reads NEQSGKSQTVIVGSWGAKVS.

The protein belongs to the jacalin lectin family. Tetramer of four alpha chains associated with two or four beta chains.

Its function is as follows. D-galactose-specific lectin, binds the T-antigen structure Gal-beta1,3-GalNAc (Thomsen-Friedenreich-antigen-specific lectin). Potent and selective stimulant of distinct T- and B-cell functions. Shows a unique ability to specifically recognize IgA-1 from human serum. The sequence is that of Agglutinin beta-1 chain from Artocarpus integer (Jack fruit).